The chain runs to 413 residues: Putative F-box/kelch-repeat protein At3g22870 (413 aa).

The F-box domain maps to 2–53 (TLTISDLPRDLKKKIFSRIPLRYVRALRLTCKEWETLIKSRSLKIDEEESQM). 2 Kelch repeats span residues 156–202 (LLRF…IGVS) and 331–379 (KVFI…RRRQ).

The chain is Putative F-box/kelch-repeat protein At3g22870 from Arabidopsis thaliana (Mouse-ear cress).